Reading from the N-terminus, the 509-residue chain is MQNFKELGISDKTVQTLEAMGFKEPTPIQKDSIPYALEGDDILGQAQTGTGKTGAFGIPLIEKVVGQQGVQSLILAPTRELAMQVAEQLREFSKGQKVQVVTVFGGMPIERQIKALKRGPQIVVGTPGRVIDHLNRRTLKTQGIHTLILDEADEMMNMGFIDDMRFIMDKIPAEQRQTMLFSATMPKAIQELVQQFMKAPKIIKTMNNEMSDPQIDEYYTIVKELEKFDTFTNFLDVHQPELAIVFGRTKRRVDELTSALLSKGYKAEGLHGDITQAKRLEVLKKFKNDQIDILVATDVAARGLDISGVSHVYNFDIPQDTESYTHRIGRTGRAGKEGIAVTFVNPIEMDYIRQIEDVNNRRMKALRPPHRKEVLKAREDDIKDRVQNWMSRENEPRLQRISSELLKEYDSTELVASLLQELVEANDEVEVQLTFEKPLARKNRSSKGGSRRSNHKRGNGKFDNKNRRSKGSKGQSSKKKNQKKFDRRDKQQKSGNQSLKGRTFADHQK.

The Q motif signature appears at 2 to 30 (QNFKELGISDKTVQTLEAMGFKEPTPIQK). Residues 33 to 203 (IPYALEGDDI…QQFMKAPKII (171 aa)) form the Helicase ATP-binding domain. 46-53 (AQTGTGKT) contacts ATP. The DEAD box signature appears at 150–153 (DEAD). Residues 214–375 (QIDEYYTIVK…LRPPHRKEVL (162 aa)) form the Helicase C-terminal domain. Basic residues-rich tracts occupy residues 440–459 (ARKNRSSKGGSRRSNHKRGN) and 467–482 (RRSKGSKGQSSKKKNQ). The segment at 440 to 509 (ARKNRSSKGG…KGRTFADHQK (70 aa)) is disordered. The span at 483-492 (KKFDRRDKQQ) shows a compositional bias: basic and acidic residues.

Belongs to the DEAD box helicase family. CshA subfamily. Oligomerizes, may be a member of the RNA degradosome.

It localises to the cytoplasm. It catalyses the reaction ATP + H2O = ADP + phosphate + H(+). Its function is as follows. DEAD-box RNA helicase possibly involved in RNA degradation. Unwinds dsRNA in both 5'- and 3'-directions, has RNA-dependent ATPase activity. The chain is DEAD-box ATP-dependent RNA helicase CshA from Staphylococcus epidermidis (strain ATCC 35984 / DSM 28319 / BCRC 17069 / CCUG 31568 / BM 3577 / RP62A).